Reading from the N-terminus, the 182-residue chain is Ribosome-recycling factor (182 aa).

The interval 136–156 (IRKQEKNSDISKDESRDLQDK) is disordered.

This sequence belongs to the RRF family.

It is found in the cytoplasm. Responsible for the release of ribosomes from messenger RNA at the termination of protein biosynthesis. May increase the efficiency of translation by recycling ribosomes from one round of translation to another. The polypeptide is Ribosome-recycling factor (Trichodesmium erythraeum (strain IMS101)).